The sequence spans 594 residues: Arrestin domain-containing protein C584.15c (594 aa).

Residues 368 to 398 show a composition bias toward polar residues; it reads NPQLQSGFTTPNLSRRNSSDFGPNSPVNIHS. 2 disordered regions span residues 368-417 and 531-594; these read NPQL…NSNA and EATR…RGVR. The segment covering 404-417 has biased composition (low complexity); that stretch reads SGQQPSSPASNSNA. Positions 534-552 are enriched in polar residues; that stretch reads RPSSPTESVEIPSNTTTIA. Positions 565-574 are enriched in pro residues; it reads PSTPAPPLPS. A Phosphoserine modification is found at serine 584.

The protein belongs to the arrestin family.

This Schizosaccharomyces pombe (strain 972 / ATCC 24843) (Fission yeast) protein is Arrestin domain-containing protein C584.15c.